We begin with the raw amino-acid sequence, 144 residues long: Large ribosomal subunit protein uL13 (144 aa).

The protein belongs to the universal ribosomal protein uL13 family. As to quaternary structure, part of the 50S ribosomal subunit.

This protein is one of the early assembly proteins of the 50S ribosomal subunit, although it is not seen to bind rRNA by itself. It is important during the early stages of 50S assembly. This Ruminiclostridium cellulolyticum (strain ATCC 35319 / DSM 5812 / JCM 6584 / H10) (Clostridium cellulolyticum) protein is Large ribosomal subunit protein uL13.